The chain runs to 122 residues: Large ribosomal subunit protein uL14c (122 aa).

This sequence belongs to the universal ribosomal protein uL14 family. In terms of assembly, part of the 50S ribosomal subunit.

Its subcellular location is the plastid. The protein localises to the chloroplast. In terms of biological role, binds to 23S rRNA. The polypeptide is Large ribosomal subunit protein uL14c (Physcomitrium patens (Spreading-leaved earth moss)).